A 350-amino-acid chain; its full sequence is Probable peptidyl-alpha-hydroxyglycine alpha-amidating lyase pgal-1 (350 aa).

An N-terminal signal peptide occupies residues 1–19; sequence MRASTACLVALLAPFYISA. The NHL 1 repeat unit spans residues 46 to 90; it reads DRELIGLFNPSKEIGQVSGLAVNKNGHIVAFHRSGRVWDEKSFND. N-linked (GlcNAc...) asparagine glycosylation is present at Asn-103. NHL repeat units lie at residues 113–154, 162–206, and 212–256; these read KKVI…IDAK, LGEK…FDAK, and QINA…FSAG. 2 disulfides stabilise this stretch: Cys-176-Cys-196 and Cys-241-Cys-252.

This sequence belongs to the peptidyl-alpha-hydroxyglycine alpha-amidating lyase family. Zn(2+) is required as a cofactor.

The protein resides in the secreted. The enzyme catalyses a [peptide]-C-terminal (2S)-2-hydroxyglycine = a [peptide]-C-terminal amide + glyoxylate. Its function is as follows. Probable lyase that catalyzes an essential reaction in C-terminal alpha-amidation of peptides. Mediates the dismutation of the unstable peptidyl(2-hydroxyglycine) intermediate to glyoxylate and the corresponding desglycine peptide amide. C-terminal amidation of peptides such as neuropeptides is essential for full biological activity. This chain is Probable peptidyl-alpha-hydroxyglycine alpha-amidating lyase pgal-1, found in Caenorhabditis elegans.